The sequence spans 94 residues: Neurotoxin LmNaTx45.2 (94 aa).

Positions 1-18 are cleaved as a signal peptide; that stretch reads MKLAILSLFLVFQIGVES. The 67-residue stretch at 20-86 folds into the LCN-type CS-alpha/beta domain; sequence KNGFALDHYG…IGDSRKNYCD (67 aa). Cystine bridges form between Cys-34–Cys-85, Cys-44–Cys-63, Cys-48–Cys-65, and Cys-59–Cys-85.

The protein belongs to the long (4 C-C) scorpion toxin superfamily. Sodium channel inhibitor family. Beta subfamily. Expressed by the venom gland.

It localises to the secreted. Its function is as follows. Binds voltage-independently at site-4 of sodium channels (Nav) and shift the voltage of activation toward more negative potentials thereby affecting sodium channel activation and promoting spontaneous and repetitive firing. The sequence is that of Neurotoxin LmNaTx45.2 from Lychas mucronatus (Chinese swimming scorpion).